The primary structure comprises 43 residues: Protein PsbN (43 aa).

Residues 7 to 27 form a helical membrane-spanning segment; the sequence is LSISIGVMVVAITGFSIYTAF.

The protein belongs to the PsbN family.

The protein resides in the cellular thylakoid membrane. In terms of biological role, may play a role in photosystem I and II biogenesis. The polypeptide is Protein PsbN (Trichodesmium erythraeum (strain IMS101)).